A 338-amino-acid chain; its full sequence is Ketol-acid reductoisomerase (NADP(+)) (338 aa).

Residues 1–181 (MKVFYDKDAD…GGGRAGIIET (181 aa)) form the KARI N-terminal Rossmann domain. NADP(+) contacts are provided by residues 24–27 (YGSQ), Arg-47, and Ser-52. His-107 is an active-site residue. Gly-133 contacts NADP(+). Positions 182-327 (NFREETETDL…SKLRAMMPWI (146 aa)) constitute a KARI C-terminal knotted domain. Asp-190, Glu-194, Glu-226, and Glu-230 together coordinate Mg(2+). Residue Ser-251 coordinates substrate.

The protein belongs to the ketol-acid reductoisomerase family. It depends on Mg(2+) as a cofactor.

The catalysed reaction is (2R)-2,3-dihydroxy-3-methylbutanoate + NADP(+) = (2S)-2-acetolactate + NADPH + H(+). It carries out the reaction (2R,3R)-2,3-dihydroxy-3-methylpentanoate + NADP(+) = (S)-2-ethyl-2-hydroxy-3-oxobutanoate + NADPH + H(+). It participates in amino-acid biosynthesis; L-isoleucine biosynthesis; L-isoleucine from 2-oxobutanoate: step 2/4. It functions in the pathway amino-acid biosynthesis; L-valine biosynthesis; L-valine from pyruvate: step 2/4. Its function is as follows. Involved in the biosynthesis of branched-chain amino acids (BCAA). Catalyzes an alkyl-migration followed by a ketol-acid reduction of (S)-2-acetolactate (S2AL) to yield (R)-2,3-dihydroxy-isovalerate. In the isomerase reaction, S2AL is rearranged via a Mg-dependent methyl migration to produce 3-hydroxy-3-methyl-2-ketobutyrate (HMKB). In the reductase reaction, this 2-ketoacid undergoes a metal-dependent reduction by NADPH to yield (R)-2,3-dihydroxy-isovalerate. In Burkholderia thailandensis (strain ATCC 700388 / DSM 13276 / CCUG 48851 / CIP 106301 / E264), this protein is Ketol-acid reductoisomerase (NADP(+)).